Reading from the N-terminus, the 414-residue chain is Serine hydroxymethyltransferase (414 aa).

(6S)-5,6,7,8-tetrahydrofolate is bound by residues leucine 117 and 121-123 (GHL). N6-(pyridoxal phosphate)lysine is present on lysine 226. 349 to 351 (SPF) contributes to the (6S)-5,6,7,8-tetrahydrofolate binding site.

This sequence belongs to the SHMT family. As to quaternary structure, homodimer. Requires pyridoxal 5'-phosphate as cofactor.

Its subcellular location is the cytoplasm. The enzyme catalyses (6R)-5,10-methylene-5,6,7,8-tetrahydrofolate + glycine + H2O = (6S)-5,6,7,8-tetrahydrofolate + L-serine. Its pathway is one-carbon metabolism; tetrahydrofolate interconversion. The protein operates within amino-acid biosynthesis; glycine biosynthesis; glycine from L-serine: step 1/1. In terms of biological role, catalyzes the reversible interconversion of serine and glycine with tetrahydrofolate (THF) serving as the one-carbon carrier. This reaction serves as the major source of one-carbon groups required for the biosynthesis of purines, thymidylate, methionine, and other important biomolecules. Also exhibits THF-independent aldolase activity toward beta-hydroxyamino acids, producing glycine and aldehydes, via a retro-aldol mechanism. This Desulfovibrio desulfuricans (strain ATCC 27774 / DSM 6949 / MB) protein is Serine hydroxymethyltransferase.